A 426-amino-acid chain; its full sequence is Serine--tRNA ligase (426 aa).

233-235 (TAE) is a binding site for L-serine. 264–266 (RSE) lines the ATP pocket. Glutamate 287 serves as a coordination point for L-serine. Residue 351 to 354 (EISS) participates in ATP binding. Residue serine 387 participates in L-serine binding.

It belongs to the class-II aminoacyl-tRNA synthetase family. Type-1 seryl-tRNA synthetase subfamily. As to quaternary structure, homodimer. The tRNA molecule binds across the dimer.

Its subcellular location is the cytoplasm. The enzyme catalyses tRNA(Ser) + L-serine + ATP = L-seryl-tRNA(Ser) + AMP + diphosphate + H(+). The catalysed reaction is tRNA(Sec) + L-serine + ATP = L-seryl-tRNA(Sec) + AMP + diphosphate + H(+). It functions in the pathway aminoacyl-tRNA biosynthesis; selenocysteinyl-tRNA(Sec) biosynthesis; L-seryl-tRNA(Sec) from L-serine and tRNA(Sec): step 1/1. In terms of biological role, catalyzes the attachment of serine to tRNA(Ser). Is also able to aminoacylate tRNA(Sec) with serine, to form the misacylated tRNA L-seryl-tRNA(Sec), which will be further converted into selenocysteinyl-tRNA(Sec). The protein is Serine--tRNA ligase of Stutzerimonas stutzeri (strain A1501) (Pseudomonas stutzeri).